The primary structure comprises 1263 residues: DNA-directed RNA polymerase subunit beta (1263 aa).

Belongs to the RNA polymerase beta chain family. The RNAP catalytic core consists of 2 alpha, 1 beta, 1 beta' and 1 omega subunit. When a sigma factor is associated with the core the holoenzyme is formed, which can initiate transcription.

It carries out the reaction RNA(n) + a ribonucleoside 5'-triphosphate = RNA(n+1) + diphosphate. In terms of biological role, DNA-dependent RNA polymerase catalyzes the transcription of DNA into RNA using the four ribonucleoside triphosphates as substrates. The chain is DNA-directed RNA polymerase subunit beta from Thermotoga petrophila (strain ATCC BAA-488 / DSM 13995 / JCM 10881 / RKU-1).